The primary structure comprises 39 residues: Photosystem II reaction center protein L (39 aa).

The helical transmembrane segment at Ser18–Phe38 threads the bilayer.

The protein belongs to the PsbL family. As to quaternary structure, PSII is composed of 1 copy each of membrane proteins PsbA, PsbB, PsbC, PsbD, PsbE, PsbF, PsbH, PsbI, PsbJ, PsbK, PsbL, PsbM, PsbT, PsbX, PsbY, Psb30/Ycf12, peripheral proteins PsbO, CyanoQ (PsbQ), PsbU, PsbV and a large number of cofactors. It forms dimeric complexes.

The protein localises to the cellular thylakoid membrane. One of the components of the core complex of photosystem II (PSII). PSII is a light-driven water:plastoquinone oxidoreductase that uses light energy to abstract electrons from H(2)O, generating O(2) and a proton gradient subsequently used for ATP formation. It consists of a core antenna complex that captures photons, and an electron transfer chain that converts photonic excitation into a charge separation. This subunit is found at the monomer-monomer interface and is required for correct PSII assembly and/or dimerization. In Prochlorococcus marinus (strain NATL2A), this protein is Photosystem II reaction center protein L.